Here is a 365-residue protein sequence, read N- to C-terminus: MAKQTPLYDQHVACGARMVDFHGWMMPLHYGSQIDEHHFVRQDAGMFDVSHMTIVDLHGNRTREFLRYLLANDVAKLTQPGKALYTGMLNESGGVIDDLIVYFLSEDYFRLVVNSATRDKDLAWISQHAEPYQVEVTVRDDLALIAVQGPQAQQKVATLLTTEQQQAIAGMKPFFGIQTGDLFIATTGYTGEAGYEIALPKQQVVAFWQQLLAAGVKPAGLGARDTLRLEAGMNLYGQEMDEKTSPLAANMGWTVAWQPEDRQFIGRAALERQRMKGTEQLVGLIMTEKGVLRNELPVYFFDAAGNQHVGVITSGSFSPTLGFSIALARVPAGIGEHAVVQIRNREMPVRVTKPGFVRAGKAIVL.

Belongs to the GcvT family. The glycine cleavage system is composed of four proteins: P, T, L and H.

The enzyme catalyses N(6)-[(R)-S(8)-aminomethyldihydrolipoyl]-L-lysyl-[protein] + (6S)-5,6,7,8-tetrahydrofolate = N(6)-[(R)-dihydrolipoyl]-L-lysyl-[protein] + (6R)-5,10-methylene-5,6,7,8-tetrahydrofolate + NH4(+). Functionally, the glycine cleavage system catalyzes the degradation of glycine. The chain is Aminomethyltransferase from Yersinia pestis bv. Antiqua (strain Antiqua).